The primary structure comprises 325 residues: Transcription initiation factor IIB (325 aa).

Residues 19–52 form a TFIIB-type zinc finger; it reads NKLWCMVCRIQDPDIIEDYAKGDLICRGCGVVVG. Zn(2+)-binding residues include cysteine 23, cysteine 26, cysteine 44, and cysteine 47. 2 consecutive repeat copies span residues 131–207 and 227–303.

Belongs to the TFIIB family.

Its subcellular location is the nucleus. Functionally, general transcription factor that plays a role in transcription initiation by RNA polymerase II (Pol II). Involved in the pre-initiation complex (PIC) formation and Pol II recruitment at promoter DNA. This chain is Transcription initiation factor IIB (gtf2b), found in Dictyostelium discoideum (Social amoeba).